The primary structure comprises 607 residues: UvrABC system protein C (607 aa).

Positions 16–94 constitute a GIY-YIG domain; it reads GRPGVYRMFD…IKEWRPPYNI (79 aa). One can recognise a UVR domain in the interval 203 to 238; it reads QQLGNELNAEMEKAAMALDFEKAAELRDQIALLRRV.

This sequence belongs to the UvrC family. Interacts with UvrB in an incision complex.

Its subcellular location is the cytoplasm. Its function is as follows. The UvrABC repair system catalyzes the recognition and processing of DNA lesions. UvrC both incises the 5' and 3' sides of the lesion. The N-terminal half is responsible for the 3' incision and the C-terminal half is responsible for the 5' incision. The protein is UvrABC system protein C of Pseudomonas putida (strain ATCC 700007 / DSM 6899 / JCM 31910 / BCRC 17059 / LMG 24140 / F1).